Consider the following 91-residue polypeptide: Small ribosomal subunit protein uS19 (91 aa).

Belongs to the universal ribosomal protein uS19 family.

In terms of biological role, protein S19 forms a complex with S13 that binds strongly to the 16S ribosomal RNA. This Synechococcus sp. (strain CC9605) protein is Small ribosomal subunit protein uS19.